Consider the following 71-residue polypeptide: Putative defensin-like protein 303 (71 aa).

A signal peptide spans 1-25 (MKSNKATFFLGLLLVYAFCIMLIES). Intrachain disulfides connect cysteine 27–cysteine 45, cysteine 33–cysteine 50, and cysteine 39–cysteine 52.

Belongs to the DEFL family.

Its subcellular location is the secreted. This is Putative defensin-like protein 303 from Arabidopsis thaliana (Mouse-ear cress).